The following is a 133-amino-acid chain: Lanmodulin (133 aa).

Positions 1 to 21 (MAFRLSSAVLLAALVAAPAYA) are cleaved as a signal peptide. Positions 35, 37, 39, 41, 46, 59, 61, 63, 65, 70, 84, 86, 88, 90, 95, 108, 110, 112, 114, and 119 each coordinate Nd(3+). 4 EF-hand domains span residues 35–46 (DPDKDGTIDLKE), 59–70 (DPDKDGTLDAKE), 84–95 (DPDNDGTLDKKE), and 108–119 (NPDNDGTIDARE).

As to quaternary structure, monomer.

The protein resides in the periplasm. Its function is as follows. High-affinity lanthanide (Ln)-binding protein. Shows 100 million-fold selectivity for La(3+) over Ca(2+). Binds 3 equiv of Ln(3+) with picomolar affinity and a fourth with approximately micromolar affinity. May be involved in receiving and then transporting lanthanides (such as La(3+), Nd(3+) and Sm(3+)) to a specific periplasmic destination. This is Lanmodulin from Methylorubrum extorquens (strain ATCC 14718 / DSM 1338 / JCM 2805 / NCIMB 9133 / AM1) (Methylobacterium extorquens).